The following is a 110-amino-acid chain: Small ribosomal subunit protein bS16 (110 aa).

Positions 84–110 (KREARNNPEKAVPRKERKAAAEAAAKK) are disordered.

It belongs to the bacterial ribosomal protein bS16 family.

In Rhodopseudomonas palustris (strain BisB18), this protein is Small ribosomal subunit protein bS16.